The sequence spans 70 residues: Large ribosomal subunit protein bL31c (70 aa).

Belongs to the bacterial ribosomal protein bL31 family. Type A subfamily. In terms of assembly, part of the 50S ribosomal subunit.

The protein resides in the plastid. The protein localises to the chloroplast. In terms of biological role, binds the 23S rRNA. This chain is Large ribosomal subunit protein bL31c, found in Porphyra purpurea (Red seaweed).